Here is a 432-residue protein sequence, read N- to C-terminus: MDEAAGDLKQALPNTCDNVQIHVEVHQKSNSTAKKEDIRMSVLKLLNRHNIVFGDYKWTEFDDGFLNSNVQSVSIVDTELKLKERQPIDLSKSSLTIHIFHLNEEGPSIENLEEENEDIVAANHWVLPAAEFHGLWESLIYDTEVKSHLLDYVTTTLLFSDRNVDSNLISWNRVVLLHGPPGTGKTSLCKALAQKLTIRLSYRYRYGQLIEINSHSLFSKWFSESGKLVTKMFQKIQELIDDKDALVFVLIDEVESLTAARSAFKAGTEPSDAIRVVNAVLMQIDQIKRYPNVVILTTSNITEKIDMAFVDRADIKQYIGPPSAAAIFRIYLSCLEELMKCQIIYPRQHLLSLRELEMIGFVENNVSRLSLVLKEISRRSEGLSGRVLRKLPFLAHALYIQSPSVTMTAFLQALSLVVDKQFEERKKLADCV.

179 to 186 contributes to the ATP binding site; that stretch reads GPPGTGKT.

This sequence belongs to the AAA ATPase family. PCH2 subfamily.

Its function is as follows. Plays a key role in chromosome recombination and chromosome structure development during meiosis. Required at early steps in meiotic recombination that leads to non-crossovers pathways. Also needed for efficient completion of homologous synapsis by influencing crossover distribution along the chromosomes affecting both crossovers and non-crossovers pathways. The sequence is that of Pachytene checkpoint protein 2 homolog (TRIP13) from Gallus gallus (Chicken).